Reading from the N-terminus, the 111-residue chain is Movement protein TGB2 (111 aa).

The Cytoplasmic segment spans residues 1–16 (MSSHQNFLTPPPDHSK). Residues 17–37 (AILAVAVGVGLAIVLHFSLSY) form a helical membrane-spanning segment. Residues 38 to 72 (KLPSPGDNIHSLPFGGTYRDGTKSIIYNSPHRGPG) are Lumenal-facing. A helical membrane pass occupies residues 73 to 93 (QSGALPIITVFAIIECTLHVL). Topologically, residues 94 to 111 (RKRDNPVRPQHSDCPNCS) are cytoplasmic.

This sequence belongs to the Tymovirales TGBp2 protein family.

The protein localises to the host endoplasmic reticulum membrane. Its function is as follows. Plays a role in viral cell-to-cell propagation, by facilitating genome transport to neighboring plant cells through plasmosdesmata,. This is Movement protein TGB2 from Carica papaya (Papaya).